The chain runs to 488 residues: Acetyl-coenzyme A carboxylase carboxyl transferase subunit beta, chloroplastic (488 aa).

The 268-residue stretch at 221–488 folds into the CoA carboxyltransferase N-terminal domain; it reads LWIQCDNCYA…FFPLNKNEIK (268 aa). Zn(2+)-binding residues include cysteine 225, cysteine 228, cysteine 244, and cysteine 247. The segment at 225 to 247 adopts a C4-type zinc-finger fold; it reads CDNCYALIYKKALKLKLNVCEQC.

It belongs to the AccD/PCCB family. As to quaternary structure, acetyl-CoA carboxylase is a heterohexamer composed of biotin carboxyl carrier protein, biotin carboxylase and 2 subunits each of ACCase subunit alpha and ACCase plastid-coded subunit beta (accD). Requires Zn(2+) as cofactor.

The protein resides in the plastid. It is found in the chloroplast stroma. It catalyses the reaction N(6)-carboxybiotinyl-L-lysyl-[protein] + acetyl-CoA = N(6)-biotinyl-L-lysyl-[protein] + malonyl-CoA. It functions in the pathway lipid metabolism; malonyl-CoA biosynthesis; malonyl-CoA from acetyl-CoA: step 1/1. Functionally, component of the acetyl coenzyme A carboxylase (ACC) complex. Biotin carboxylase (BC) catalyzes the carboxylation of biotin on its carrier protein (BCCP) and then the CO(2) group is transferred by the transcarboxylase to acetyl-CoA to form malonyl-CoA. In Aethionema grandiflorum (Persian stone-cress), this protein is Acetyl-coenzyme A carboxylase carboxyl transferase subunit beta, chloroplastic.